Here is a 143-residue protein sequence, read N- to C-terminus: Papain inhibitor (143 aa).

The N-terminal stretch at 1-33 (MREFRRVRRVRFAACALVAAATGITLAAGPASA) is a signal peptide.

In terms of assembly, monomer.

It localises to the secreted. Its function is as follows. Stress protein produced under hyperthermal stress conditions. Serves as a glutamine and lysine donor substrate for transglutaminase. Inhibits the cysteine proteases papain and bromelain as well as the bovine serine protease trypsin. Has hardly any or no effect on subtilisin, bovine chymotrypsin, proteinase K from T.album, transglutaminase-activating metalloproteinase (TAMEP) from S.mobaraensis, dispase from B.polymyxa, thermolysin from B.thermoproteolyticus or collagenase from C.histolyticum. The sequence is that of Papain inhibitor (pi) from Streptomyces mobaraensis (Streptoverticillium mobaraense).